Consider the following 288-residue polypeptide: Protein PXR1 (288 aa).

The 48-residue stretch at 25–72 folds into the G-patch domain; the sequence is QSRFGHKHLMRFGWQPGQGLGTQPVQSMKTHIKVSIKDDNLGLGAKLK. The interval 147-258 is disordered; that stretch reads SYSQMEKDSS…TSIPESVSTR (112 aa). Residues 157–166 show a composition bias toward acidic residues; the sequence is SDEESDDDED. Basic residues-rich tracts occupy residues 169-185 and 195-214; these read KKHK…KKRK and KKKK…KDKK. A compositionally biased stretch (low complexity) spans 238–256; that stretch reads RTASIESSTSATSIPESVS.

Belongs to the PINX1 family.

The protein resides in the nucleus. It localises to the nucleolus. Its function is as follows. Involved in rRNA-processing at A0, A1 and A2 sites and negatively regulates telomerase. The chain is Protein PXR1 (PXR1) from Candida glabrata (strain ATCC 2001 / BCRC 20586 / JCM 3761 / NBRC 0622 / NRRL Y-65 / CBS 138) (Yeast).